Consider the following 940-residue polypeptide: Isoleucine--tRNA ligase (940 aa).

The short motif at 58 to 68 (PYANGSIHIGH) is the 'HIGH' region element. An L-isoleucyl-5'-AMP-binding site is contributed by Glu564. A 'KMSKS' region motif is present at residues 605 to 609 (KMSKS). Position 608 (Lys608) interacts with ATP. Cys903, Cys906, Cys923, and Cys926 together coordinate Zn(2+).

This sequence belongs to the class-I aminoacyl-tRNA synthetase family. IleS type 1 subfamily. In terms of assembly, monomer. It depends on Zn(2+) as a cofactor.

It is found in the cytoplasm. It carries out the reaction tRNA(Ile) + L-isoleucine + ATP = L-isoleucyl-tRNA(Ile) + AMP + diphosphate. Catalyzes the attachment of isoleucine to tRNA(Ile). As IleRS can inadvertently accommodate and process structurally similar amino acids such as valine, to avoid such errors it has two additional distinct tRNA(Ile)-dependent editing activities. One activity is designated as 'pretransfer' editing and involves the hydrolysis of activated Val-AMP. The other activity is designated 'posttransfer' editing and involves deacylation of mischarged Val-tRNA(Ile). In Shewanella sp. (strain MR-7), this protein is Isoleucine--tRNA ligase.